A 599-amino-acid chain; its full sequence is Elongation factor 4 (599 aa).

Residues 5–187 form the tr-type G domain; it reads SHIRNFSIIA…RLVAVIPPPT (183 aa). GTP is bound by residues 17-22 and 134-137; these read DHGKST and NKMD.

This sequence belongs to the TRAFAC class translation factor GTPase superfamily. Classic translation factor GTPase family. LepA subfamily.

It localises to the cell inner membrane. It catalyses the reaction GTP + H2O = GDP + phosphate + H(+). Required for accurate and efficient protein synthesis under certain stress conditions. May act as a fidelity factor of the translation reaction, by catalyzing a one-codon backward translocation of tRNAs on improperly translocated ribosomes. Back-translocation proceeds from a post-translocation (POST) complex to a pre-translocation (PRE) complex, thus giving elongation factor G a second chance to translocate the tRNAs correctly. Binds to ribosomes in a GTP-dependent manner. This chain is Elongation factor 4, found in Stutzerimonas stutzeri (strain A1501) (Pseudomonas stutzeri).